The sequence spans 93 residues: Small ribosomal subunit protein uS19 (93 aa).

Belongs to the universal ribosomal protein uS19 family.

Its function is as follows. Protein S19 forms a complex with S13 that binds strongly to the 16S ribosomal RNA. The protein is Small ribosomal subunit protein uS19 (rpsS) of Thermus thermophilus (strain ATCC BAA-163 / DSM 7039 / HB27).